Here is a 103-residue protein sequence, read N- to C-terminus: Histone H4 (103 aa).

The segment covering 1-14 (MSGRGKGGKGLGKG) has biased composition (gly residues). Residues 1 to 20 (MSGRGKGGKGLGKGGAKRHR) are disordered. Ser-2 carries the post-translational modification N-acetylserine. N6-acetyl-N6-methyllysine; alternate is present on residues Lys-6 and Lys-13. A DNA-binding region spans residues 17-21 (KRHRK). Lys-21 is subject to N6-methyllysine.

Belongs to the histone H4 family. In terms of assembly, the nucleosome is a histone octamer containing two molecules each of H2A, H2B, H3 and H4 assembled in one H3-H4 heterotetramer and two H2A-H2B heterodimers. The octamer wraps approximately 147 bp of DNA.

The protein localises to the nucleus. It localises to the chromosome. Core component of nucleosome. Nucleosomes wrap and compact DNA into chromatin, limiting DNA accessibility to the cellular machineries which require DNA as a template. Histones thereby play a central role in transcription regulation, DNA repair, DNA replication and chromosomal stability. DNA accessibility is regulated via a complex set of post-translational modifications of histones, also called histone code, and nucleosome remodeling. This is Histone H4 from Solaster stimpsoni (Striped sun sea star).